Consider the following 471-residue polypeptide: MTDTDKTKAASSMWGGRFAGGPAAIMQRINASIDFDKRLYAQDIRGSKAHCRMLVKQQILTEADGALILDGLDKVLAEIEAGNFPFSHALEDIHMNVESRLAELIGEAAGRLHTARSRNDQVATDFRLWVRDAVDGMESALKELVTALLDRAEEHAATVMPGFTHLQTAQPVTFGHHMMAYVEMISRDRSRLADARRRLNECPLGSAALAGTSFPIDREATARDLGFAGPMRNSLDGVSDRDFALEFMSASAICAVHLSRLAEELVIWTSSQFRFVTLSDAFTTGSSIMPQKRNPDAAELIRAKTGRVIGDLNALLIVMKGLPLAYSKDMQDDKEPVFEVADTMELAIAAMTGMVRDMTVNVDILRAAAGAGFTTATDIADWCVRALKMPFRRAHHVAGSLVKLAEGKNCGLEDLTLAEMQAIEPGITEEARSVLSVESSVNSRTSLGGTAPVRVREAVAGARRRLMDEAP.

Belongs to the lyase 1 family. Argininosuccinate lyase subfamily.

Its subcellular location is the cytoplasm. The enzyme catalyses 2-(N(omega)-L-arginino)succinate = fumarate + L-arginine. Its pathway is amino-acid biosynthesis; L-arginine biosynthesis; L-arginine from L-ornithine and carbamoyl phosphate: step 3/3. In Paramagnetospirillum magneticum (strain ATCC 700264 / AMB-1) (Magnetospirillum magneticum), this protein is Argininosuccinate lyase.